A 481-amino-acid chain; its full sequence is DNA gyrase subunit B (481 aa).

A Toprim domain is found at 323-442 (CELYLVEGDS…QGYVYIAQPP (120 aa)). Glu329, Asp407, and Asp409 together coordinate Mg(2+).

Belongs to the type II topoisomerase GyrB family. Heterotetramer, composed of two GyrA and two GyrB chains. In the heterotetramer, GyrA contains the active site tyrosine that forms a transient covalent intermediate with DNA, while GyrB binds cofactors and catalyzes ATP hydrolysis. It depends on Mg(2+) as a cofactor. Requires Mn(2+) as cofactor. The cofactor is Ca(2+).

The protein localises to the cytoplasm. It catalyses the reaction ATP-dependent breakage, passage and rejoining of double-stranded DNA.. Its function is as follows. A type II topoisomerase that negatively supercoils closed circular double-stranded (ds) DNA in an ATP-dependent manner to modulate DNA topology and maintain chromosomes in an underwound state. Negative supercoiling favors strand separation, and DNA replication, transcription, recombination and repair, all of which involve strand separation. Also able to catalyze the interconversion of other topological isomers of dsDNA rings, including catenanes and knotted rings. Type II topoisomerases break and join 2 DNA strands simultaneously in an ATP-dependent manner. The chain is DNA gyrase subunit B (gyrB) from Chitinophaga japonensis (Flexibacter japonensis).